Reading from the N-terminus, the 462-residue chain is Calcitonin gene-related peptide type 1 receptor (462 aa).

The first 22 residues, 1–22, serve as a signal peptide directing secretion; the sequence is MEKKYILYFLFLLPFFMILVIA. Residues 23-140 are Extracellular-facing; that stretch reads ETEEENPDDL…NTHEKVQTAL (118 aa). Disulfide bonds link cysteine 49/cysteine 75, cysteine 66/cysteine 106, and cysteine 89/cysteine 128. N-linked (GlcNAc...) asparagine glycans are attached at residues asparagine 67, asparagine 119, and asparagine 124. Residues 141–165 traverse the membrane as a helical segment; it reads NLFYLTIIGHGLSIASLLISLGIFF. The Cytoplasmic segment spans residues 166 to 176; sequence YFKSLSCQRIT. Residues 177 to 199 traverse the membrane as a helical segment; sequence LHKNLFFSFVCNSIVTIIHLTAV. Residues 200-210 are Extracellular-facing; it reads ANNQALVATNP. A helical membrane pass occupies residues 211 to 239; it reads VSCKVFQFIHLYLMGCNYFWMLCEGIYLH. Topologically, residues 240–253 are cytoplasmic; that stretch reads TLIVVAVFAEKQHL. The chain crosses the membrane as a helical span at residues 254–274; sequence MWYYFLGWGFPLIPACIHAVA. Residues 275-290 lie on the Extracellular side of the membrane; the sequence is RRLYYNDNCWISSDTH. A required for RAMP3 interaction region spans residues 289–290; sequence TH. Residues 291-315 form a helical membrane-spanning segment; the sequence is LLYIIHGPICAALLVNLFFLLNIVR. The Cytoplasmic segment spans residues 316–330; the sequence is VLITKLKVTHQAESN. A helical membrane pass occupies residues 331 to 352; it reads LYMKAVRATLILVPLLGIEFVL. Residues 353 to 367 are Extracellular-facing; that stretch reads IPWRPEGKIAEEVYD. A helical transmembrane segment spans residues 368-388; it reads YIMHILVHYQGLLVSTIYCFF. Topologically, residues 389 to 462 are cytoplasmic; the sequence is NGEVQAILRR…IVIKPEKLYD (74 aa). Serine 421 and serine 446 each carry phosphoserine.

The protein belongs to the G-protein coupled receptor 2 family. In terms of assembly, heterodimer of CALCRL and RAMP1; the receptor complex functions as CGRP receptor. Heterodimer of CALCRL and RAMP2 or CALCRL and RAMP3; the complexes function as adrenomedullin receptor. In terms of tissue distribution, detected in lung and coronary artery.

It is found in the cell membrane. Functionally, g protein-coupled receptor which specificity is determined by its interaction with receptor-activity-modifying proteins (RAMPs). Together with RAMP1, form the receptor complex for calcitonin-gene-related peptides CALCA/CGRP1 and CALCB/CGRP2. Together with RAMP2 or RAMP3, function as receptor complexes for adrenomedullin (ADM and ADM2). Ligand binding causes a conformation change that triggers signaling via guanine nucleotide-binding proteins (G proteins) and modulates the activity of downstream effectors. Activates cAMP-dependent pathway. The chain is Calcitonin gene-related peptide type 1 receptor (CALCRL) from Sus scrofa (Pig).